Reading from the N-terminus, the 335-residue chain is MQTVLKYLLLIMCGSFCASEELQNQTNVPAIFFSYKLTPGILKYQEDYDRAVTLPRDTFIEAAEKFLGVCNADTYVFINQPGLRKLDFLEFETEFVSLQRYIRRSSTAIKFEKVDLLPQDLYYDLAEFVKEYCNVDQVLNLRGNNTEDFQPFIDSEKRVIIIEYPKLPEDTNERKEAFRHYDKYLRTILAQIPSPEQNVIYTSLNPGTTLAHESIIPIQIFPDIFDIKSRVGEVEQNNRVLDVPRLSFNDYTPRFSEPPSEYVSIFDSQLIENNRGLLQLIFTILVGYILIQFFFTKKTIVDEKITNKKDNVKQTSPQLLKKVQEIQKKPSQQVS.

An N-terminal signal peptide occupies residues 1-17 (MQTVLKYLLLIMCGSFC). Over 20-275 (EELQNQTNVP…FDSQLIENNR (256 aa)) the chain is Lumenal. N-linked (GlcNAc...) asparagine glycosylation is found at N24 and N144. Residues 276–296 (GLLQLIFTILVGYILIQFFFT) traverse the membrane as a helical segment. Over 297 to 335 (KKTIVDEKITNKKDNVKQTSPQLLKKVQEIQKKPSQQVS) the chain is Cytoplasmic.

Belongs to the BIG1 family. N-glycosylated.

The protein localises to the endoplasmic reticulum membrane. In terms of biological role, required for normal beta-1,6-glucan synthesis. In Saccharomyces cerevisiae (strain ATCC 204508 / S288c) (Baker's yeast), this protein is Protein BIG1 (BIG1).